Consider the following 341-residue polypeptide: tRNA N6-adenosine threonylcarbamoyltransferase (341 aa).

H114 and H118 together coordinate Fe cation. Substrate contacts are provided by residues 136–140 (LVSGG), D169, G182, D186, and N278. D304 provides a ligand contact to Fe cation.

This sequence belongs to the KAE1 / TsaD family. It depends on Fe(2+) as a cofactor.

The protein localises to the cytoplasm. The catalysed reaction is L-threonylcarbamoyladenylate + adenosine(37) in tRNA = N(6)-L-threonylcarbamoyladenosine(37) in tRNA + AMP + H(+). In terms of biological role, required for the formation of a threonylcarbamoyl group on adenosine at position 37 (t(6)A37) in tRNAs that read codons beginning with adenine. Is involved in the transfer of the threonylcarbamoyl moiety of threonylcarbamoyl-AMP (TC-AMP) to the N6 group of A37, together with TsaE and TsaB. TsaD likely plays a direct catalytic role in this reaction. This is tRNA N6-adenosine threonylcarbamoyltransferase from Lactococcus lactis subsp. cremoris (strain SK11).